Here is a 1369-residue protein sequence, read N- to C-terminus: Rho-associated protein kinase 1 (1369 aa).

Residue S2 is modified to N-acetylserine. Residues 76–338 form the Protein kinase domain; that stretch reads YEVVKVIGRG…VEEIKRHLFF (263 aa). ATP is bound by residues 82-90 and K105; that span reads IGRGAFGEV. Residue D198 is the Proton acceptor of the active site. The region spanning 341–409 is the AGC-kinase C-terminal domain; sequence DQWAWETLRD…YSNRRYLPSA (69 aa). Residues 368-727 are interaction with FHOD1; it reads FDDLEEDKGD…KKLKEEREAR (360 aa). Residues 422-692 adopt a coiled-coil conformation; the sequence is KNVQESLQKT…RLEQEVNEHK (271 aa). Residues 479–556 enclose the REM-1 domain; the sequence is SAVSQIEKEK…LEEANDLLRT (78 aa). The segment at 707-946 is SHROOM3 binding; sequence EAKSVAMCEM…TVSRLEEANN (240 aa). Residues 949–1015 enclose the RhoBD domain; that stretch reads TKDIELLRKE…LAEIMNRKDF (67 aa). The RHOA binding stretch occupies residues 998 to 1010; sequence LKTQAVNKLAEIM. Positions 1011-1102 form a coiled coil; the sequence is NRKDFKIDRK…KLLDLSDSTS (92 aa). A phosphoserine mark is found at S1105 and S1108. Residues 1115 to 1369 form an auto-inhibitory region; sequence NLPVGSACIP…VVKNTSGKTS (255 aa). The region spanning 1133–1332 is the PH domain; the sequence is SSRIEGWLSV…WVTHLVKKIP (200 aa). The Phorbol-ester/DAG-type zinc finger occupies 1243–1298; that stretch reads GHEFIPTLYHFPANCEACAKPLWHVFKPPPALECRRCHVKSHRDHLDKKEDLIPPC. Position 1343 is a phosphoserine (S1343).

This sequence belongs to the protein kinase superfamily. AGC Ser/Thr protein kinase family. In terms of assembly, homodimer. Interacts with GEM, MYLC2B, RHOE, LIMK1, LIMK2, TSG101, CHORDC1, DAPK3, PFN1, PTEN and JIP3. Interacts with FHOD1 in a Src-dependent manner. Interacts with ITGB1BP1 (via N-terminus and PTB domain). Interacts with RHOA (activated by GTP), RHOB, RHOC and PPP1R12A. Interacts with SHROOM3. It depends on Mg(2+) as a cofactor. Post-translationally, autophosphorylated on serine and threonine residues. Cleaved by caspase-3 during apoptosis. This leads to constitutive activation of the kinase and membrane blebbing. As to expression, highly expressed in brain, spleen, lung, liver, skeletal muscle, kidney and testis.

It localises to the cytoplasm. Its subcellular location is the cytoskeleton. It is found in the microtubule organizing center. The protein resides in the centrosome. The protein localises to the centriole. It localises to the golgi apparatus membrane. Its subcellular location is the cell projection. It is found in the bleb. The protein resides in the cell membrane. The protein localises to the lamellipodium. It localises to the ruffle. It catalyses the reaction L-seryl-[protein] + ATP = O-phospho-L-seryl-[protein] + ADP + H(+). The enzyme catalyses L-threonyl-[protein] + ATP = O-phospho-L-threonyl-[protein] + ADP + H(+). Its activity is regulated as follows. Activated by RHOA binding. Inhibited by Y-27632. Protein kinase which is a key regulator of the actin cytoskeleton and cell polarity. Involved in regulation of smooth muscle contraction, actin cytoskeleton organization, stress fiber and focal adhesion formation, neurite retraction, cell adhesion and motility via phosphorylation of DAPK3, GFAP, LIMK1, LIMK2, MYL9/MLC2, TPPP, PFN1 and PPP1R12A. Phosphorylates FHOD1 and acts synergistically with it to promote SRC-dependent non-apoptotic plasma membrane blebbing. Phosphorylates JIP3 and regulates the recruitment of JNK to JIP3 upon UVB-induced stress. Acts as a suppressor of inflammatory cell migration by regulating PTEN phosphorylation and stability. Acts as a negative regulator of VEGF-induced angiogenic endothelial cell activation. Required for centrosome positioning and centrosome-dependent exit from mitosis. Plays a role in terminal erythroid differentiation. Inhibits podocyte motility via regulation of actin cytoskeletal dynamics and phosphorylation of CFL1. Promotes keratinocyte terminal differentiation. Involved in osteoblast compaction through the fibronectin fibrillogenesis cell-mediated matrix assembly process, essential for osteoblast mineralization. May regulate closure of the eyelids and ventral body wall by inducing the assembly of actomyosin bundles. The sequence is that of Rho-associated protein kinase 1 (Rock1) from Rattus norvegicus (Rat).